Here is a 139-residue protein sequence, read N- to C-terminus: Large ribosomal subunit protein uL22 (139 aa).

The tract at residues 1–21 (MTAPTPEFRNKKQRKQQVKLR) is disordered.

This sequence belongs to the universal ribosomal protein uL22 family. In terms of assembly, part of the 50S ribosomal subunit.

Its function is as follows. This protein binds specifically to 23S rRNA; its binding is stimulated by other ribosomal proteins, e.g. L4, L17, and L20. It is important during the early stages of 50S assembly. It makes multiple contacts with different domains of the 23S rRNA in the assembled 50S subunit and ribosome. Functionally, the globular domain of the protein is located near the polypeptide exit tunnel on the outside of the subunit, while an extended beta-hairpin is found that lines the wall of the exit tunnel in the center of the 70S ribosome. The chain is Large ribosomal subunit protein uL22 from Deinococcus deserti (strain DSM 17065 / CIP 109153 / LMG 22923 / VCD115).